We begin with the raw amino-acid sequence, 295 residues long: CRISPR system Cmr endoribonuclease Cmr4 (295 aa).

It belongs to the CRISPR system Cmr4 family. Forms oligomers in isolation. Part of the type III-B Cmr ribonucleoprotein (RNP) complex, an elongated RNP with Cmr2 and Cmr3 as the base, with Cmr4 and Cmr5 forming a helical core along the mature crRNA (39 or 45 nt in length), while the complex is capped by Cmr6 and Cmr1. The 5' end of the crRNA is bound to Cmr2 and Cmr3, while Cmr6 and a Cmr1 subunit (Cmr1-1 or Cmr1-2) cap the 3' end of the crRNA. The target RNA lies anti-parallel to the crRNA, with its 5' end near Cmr1 and Cmr6 and its 3' end near Cmr2 and Cmr3; major target RNA cleavage occurs nears the junction of Cmr1/Cmr6 and Cmr4/Cmr5, with minor cleavage occurring at 6 nt intervals which coincide with the proposed spacing of Cmr4 subunits. Interacts with Cmr5. Interacts with Cmr2, Cmr3, Cmr5 and Cmr6.

It localises to the cytoplasm. Functionally, CRISPR (clustered regularly interspaced short palindromic repeat), is an adaptive immune system that provides protection against mobile genetic elements (viruses, transposable elements and conjugative plasmids). CRISPR clusters contain sequences complementary to antecedent mobile elements and target invading nucleic acids. CRISPR clusters are transcribed and processed into CRISPR RNA (crRNA), formerly called psiRNA (prokaryotic silencing) in this organism. Part of the Cmr ribonucleoprotein complex which has divalent cation-dependent endoribonuclease activity specific for ssRNA complementary to the crRNA (target RNA), generating 5' hydroxy- and 3' phosphate or 2'-3' cyclic phosphate termini. This is probably the subunit that cleaves the target RNA. Cmr complex does not cleave ssDNA complementary to the crRNA. Cleavage of target RNA is guided by the crRNA; substrate cleavage occurs a fixed distance (14 nt) from the 3' end of the crRNA. In vitro reconstitution shows Cmr1-2 and Cmr5 are not absolutely necessary for target cleavage. The sequence is that of CRISPR system Cmr endoribonuclease Cmr4 from Pyrococcus furiosus (strain ATCC 43587 / DSM 3638 / JCM 8422 / Vc1).